We begin with the raw amino-acid sequence, 268 residues long: DNA repair protein RecO (268 aa).

The protein belongs to the RecO family.

Functionally, involved in DNA repair and RecF pathway recombination. In Mycobacterium leprae (strain Br4923), this protein is DNA repair protein RecO.